The sequence spans 120 residues: C-C motif chemokine 16 (120 aa).

Residues 1–23 (MKVSEAALSLLVLILIITSASRS) form the signal peptide. 2 cysteine pairs are disulfide-bonded: Cys37-Cys60 and Cys38-Cys76.

The protein belongs to the intercrine beta (chemokine CC) family. Mainly expressed in liver, also found in spleen and thymus. Highly expressed in LPS- and IFN-gamma-activated monocytes, weakly in some lymphocytes, including natural killer cells, gamma-delta T-cells, and some T-cell clones.

The protein resides in the secreted. In terms of biological role, shows chemotactic activity for lymphocytes and monocytes but not neutrophils. Also shows potent myelosuppressive activity, suppresses proliferation of myeloid progenitor cells. Recombinant SCYA16 shows chemotactic activity for monocytes and THP-1 monocytes, but not for resting lymphocytes and neutrophils. Induces a calcium flux in THP-1 cells that were desensitized by prior expression to RANTES. This is C-C motif chemokine 16 (CCL16) from Homo sapiens (Human).